The sequence spans 146 residues: Acidic phospholipase A2 S8-51 (146 aa).

An N-terminal signal peptide occupies residues 1–19 (MYPAHLLVLLAVCVSLLGA). Residues 20–27 (ASIPPQPL) constitute a propeptide that is removed on maturation. Cystine bridges form between C38-C98, C54-C145, C56-C72, C71-C126, C78-C119, C87-C112, and C105-C117. Ca(2+)-binding residues include Y55, G57, and G59. The active site involves H75. D76 lines the Ca(2+) pocket. The active site involves D120.

This sequence belongs to the phospholipase A2 family. Group I subfamily. D49 sub-subfamily. Ca(2+) is required as a cofactor. Expressed by the venom gland.

It localises to the secreted. The catalysed reaction is a 1,2-diacyl-sn-glycero-3-phosphocholine + H2O = a 1-acyl-sn-glycero-3-phosphocholine + a fatty acid + H(+). In terms of biological role, snake venom phospholipase A2 (PLA2) that inhibits collagen-induced platelet aggregation. PLA2 catalyzes the calcium-dependent hydrolysis of the 2-acyl groups in 3-sn-phosphoglycerides. The sequence is that of Acidic phospholipase A2 S8-51 from Austrelaps superbus (Lowland copperhead snake).